Reading from the N-terminus, the 124-residue chain is Glycine cleavage system H protein (124 aa).

A Lipoyl-binding domain is found at 19–101 (VATVGITNHA…EGEGWLFKME (83 aa)). Lys60 is modified (N6-lipoyllysine).

This sequence belongs to the GcvH family. In terms of assembly, the glycine cleavage system is composed of four proteins: P, T, L and H. It depends on (R)-lipoate as a cofactor.

Its function is as follows. The glycine cleavage system catalyzes the degradation of glycine. The H protein shuttles the methylamine group of glycine from the P protein to the T protein. The sequence is that of Glycine cleavage system H protein from Thermotoga maritima (strain ATCC 43589 / DSM 3109 / JCM 10099 / NBRC 100826 / MSB8).